We begin with the raw amino-acid sequence, 114 residues long: Photosystem II reaction center Psb28 protein (114 aa).

The protein belongs to the Psb28 family. Part of the photosystem II complex.

The protein localises to the cellular thylakoid membrane. The sequence is that of Photosystem II reaction center Psb28 protein from Rippkaea orientalis (strain PCC 8801 / RF-1) (Cyanothece sp. (strain PCC 8801)).